We begin with the raw amino-acid sequence, 341 residues long: Methionine import ATP-binding protein MetN (341 aa).

The region spanning 2 to 241 is the ABC transporter domain; it reads INLQDVSKVY…PKEQMTKRFV (240 aa). 38–45 is an ATP binding site; sequence GYSGAGKS.

It belongs to the ABC transporter superfamily. Methionine importer (TC 3.A.1.24) family. In terms of assembly, the complex is composed of two ATP-binding proteins (MetN), two transmembrane proteins (MetP) and a solute-binding protein (MetQ).

It is found in the cell membrane. It carries out the reaction L-methionine(out) + ATP + H2O = L-methionine(in) + ADP + phosphate + H(+). The catalysed reaction is D-methionine(out) + ATP + H2O = D-methionine(in) + ADP + phosphate + H(+). Part of the ABC transporter complex MetNPQ involved in methionine import. Responsible for energy coupling to the transport system. It has also been shown to be involved in methionine sulfoxide transport. The polypeptide is Methionine import ATP-binding protein MetN (Bacillus subtilis (strain 168)).